The chain runs to 84 residues: Small ribosomal subunit protein bS20 (84 aa).

Belongs to the bacterial ribosomal protein bS20 family.

Binds directly to 16S ribosomal RNA. This is Small ribosomal subunit protein bS20 from Bacteroides thetaiotaomicron (strain ATCC 29148 / DSM 2079 / JCM 5827 / CCUG 10774 / NCTC 10582 / VPI-5482 / E50).